A 79-amino-acid polypeptide reads, in one-letter code: Sec-independent protein translocase protein TatA (79 aa).

A helical transmembrane segment spans residues 1 to 21; sequence MGSLSIWHWIVVIAVVLLLFG. Residues 42 to 60 show a composition bias toward basic and acidic residues; that stretch reads GLQDDEKTAEKPDAVKSLD. The tract at residues 42 to 79 is disordered; the sequence is GLQDDEKTAEKPDAVKSLDHNATTGTPPNRTDVGSKAV. Polar residues predominate over residues 61–70; the sequence is HNATTGTPPN.

Belongs to the TatA/E family. The Tat system comprises two distinct complexes: a TatABC complex, containing multiple copies of TatA, TatB and TatC subunits, and a separate TatA complex, containing only TatA subunits. Substrates initially bind to the TatABC complex, which probably triggers association of the separate TatA complex to form the active translocon.

The protein resides in the cell inner membrane. In terms of biological role, part of the twin-arginine translocation (Tat) system that transports large folded proteins containing a characteristic twin-arginine motif in their signal peptide across membranes. TatA could form the protein-conducting channel of the Tat system. The sequence is that of Sec-independent protein translocase protein TatA from Rhodopseudomonas palustris (strain HaA2).